The following is a 492-amino-acid chain: Phosphatidylglycerol--prolipoprotein diacylglyceryl transferase (492 aa).

9 helical membrane-spanning segments follow: residues 40–60 (IFGI…YVGW), 72–92 (AIRQ…VVVP), 106–126 (VAVR…VGLA), 133–153 (AGLG…GGLL), 184–204 (QGGL…LIAL), 214–234 (IGDV…LGCL), 361–381 (VWGT…VLLI), 409–429 (GVLM…LEWI), and 441–461 (LSIS…TLFI). R230 is an a 1,2-diacyl-sn-glycero-3-phospho-(1'-sn-glycerol) binding site.

Belongs to the Lgt family.

It localises to the cell inner membrane. The catalysed reaction is L-cysteinyl-[prolipoprotein] + a 1,2-diacyl-sn-glycero-3-phospho-(1'-sn-glycerol) = an S-1,2-diacyl-sn-glyceryl-L-cysteinyl-[prolipoprotein] + sn-glycerol 1-phosphate + H(+). Its pathway is protein modification; lipoprotein biosynthesis (diacylglyceryl transfer). Functionally, catalyzes the transfer of the diacylglyceryl group from phosphatidylglycerol to the sulfhydryl group of the N-terminal cysteine of a prolipoprotein, the first step in the formation of mature lipoproteins. The protein is Phosphatidylglycerol--prolipoprotein diacylglyceryl transferase of Rhodopirellula baltica (strain DSM 10527 / NCIMB 13988 / SH1).